Consider the following 385-residue polypeptide: Prostacyclin receptor (385 aa).

Residues 1–16 (MADSCRNLTYVRDSVG) lie on the Extracellular side of the membrane. 2 disulfide bridges follow: C5–C165 and C92–C170. N7 is a glycosylation site (N-linked (GlcNAc...) asparagine). A helical transmembrane segment spans residues 17–38 (PATSTLMFVAGVVGNGLALGIL). Residues 39–51 (GARRHSRPSAFAV) lie on the Cytoplasmic side of the membrane. Residues 52–76 (LVTGLGVTDLLGTCFLSPAVFAAYA) form a helical membrane-spanning segment. Over 77–94 (RNSSLLGLARGRPALCDA) the chain is Extracellular. A helical transmembrane segment spans residues 95–115 (FAFAMTFFGLASTLILFAMAV). Over 116–134 (ERCLALSHPYLYAQLDGPR) the chain is Cytoplasmic. The helical transmembrane segment at 135–158 (RARLALPAIYAFCTIFCSLPFLGL) threads the bilayer. Topologically, residues 159–181 (GQHQQYCPGSWCFIRMRSAEPGG) are extracellular. A helical membrane pass occupies residues 182-208 (CAFLLAYASLVALLVAAIVLCNGSVTL). The Cytoplasmic segment spans residues 209–234 (SLCRMYRQQRRHQARCPRPRAGEDEV). The helical transmembrane segment at 235–259 (DHLILLALMTGIMAVCSLPLTPQIR) threads the bilayer. The Extracellular portion of the chain corresponds to 260 to 273 (GFTQAIAPDSSEMG). The chain crosses the membrane as a helical span at residues 274-294 (DLLAFRFNAFNPILDPWVFIL). At 295–385 (FRKSVFQRLK…AGSEAACSLC (91 aa)) the chain is on the cytoplasmic side. Residues 315–344 (AQGDSRTSLSQSASGRKDSSAPPALEGKKG) are disordered. A compositionally biased stretch (polar residues) spans 318–328 (DSRTSLSQSAS). C382 bears the Cysteine methyl ester mark. C382 carries S-farnesyl cysteine lipidation. A propeptide spans 383–385 (SLC) (removed in mature form).

This sequence belongs to the G-protein coupled receptor 1 family. In terms of assembly, interacts (non-isoprenylated C-terminus) with PDZK1. Post-translationally, isoprenylation does not influence ligand binding but is required for efficient coupling to the effectors adenylyl cyclase and phospholipase C.

The protein localises to the cell membrane. Receptor for prostacyclin (prostaglandin I2 or PGI2). The activity of this receptor is mediated by G(s) proteins which activate adenylate cyclase. This chain is Prostacyclin receptor (PTGIR), found in Bos taurus (Bovine).